The chain runs to 341 residues: MLVLGLETSCDETGVALYDSERGLLADALFSQIDLHRVYGGVVPELASRDHVKRMLPLIRQVLAEAGREPGQVDAVAYTAGPGLVGALLVGASCAQALALAWGVPAVGVHHMEGHLLAPMLEAQPPAFPFVALLVSGGHTQLVRVDGIGRYELLGESVDDAAGEAFDKTAKLMGLRYPGGPEIARLAEQGTPGRFVFPRPMTDRPGLDFSFSGLKTFTLNTWQQCRDAGDDSEQTRCDIALAFQQAVVETLTIKCRRALKQTGLKSLVIAGGVSANQSLRQSLETMLAELKGQVFYARPRFCTDNGAMIAYAGCQRLLAGQHDGPAIAVQPRWSMETLPAI.

The Fe cation site is built by histidine 111 and histidine 115. Substrate-binding positions include 134–138 (LVSGG), aspartate 167, glycine 180, and asparagine 276. Aspartate 304 contacts Fe cation.

Belongs to the KAE1 / TsaD family. Fe(2+) serves as cofactor.

The protein resides in the cytoplasm. It catalyses the reaction L-threonylcarbamoyladenylate + adenosine(37) in tRNA = N(6)-L-threonylcarbamoyladenosine(37) in tRNA + AMP + H(+). Its function is as follows. Required for the formation of a threonylcarbamoyl group on adenosine at position 37 (t(6)A37) in tRNAs that read codons beginning with adenine. Is involved in the transfer of the threonylcarbamoyl moiety of threonylcarbamoyl-AMP (TC-AMP) to the N6 group of A37, together with TsaE and TsaB. TsaD likely plays a direct catalytic role in this reaction. This is tRNA N6-adenosine threonylcarbamoyltransferase from Stutzerimonas stutzeri (strain A1501) (Pseudomonas stutzeri).